Reading from the N-terminus, the 226-residue chain is Transcriptional activator plp-1 (226 aa).

This sequence belongs to the PUR DNA-binding protein family.

Its subcellular location is the nucleus. It is found in the chromosome. In terms of biological role, probable transcription activator. Binds telomeric DNA containing repeats of the sequence, 5'-TTAGGC-3'. Binds to end-1 promoter, activating end-1 expression, which is required for endoderm specification during embryonic development. In Caenorhabditis elegans, this protein is Transcriptional activator plp-1.